Reading from the N-terminus, the 1124-residue chain is Phytochrome A1 (1124 aa).

A compositionally biased stretch (low complexity) spans 1–14 (MSSSRPSQSSTTSA). Residues 1–20 (MSSSRPSQSSTTSARSKHSA) form a disordered region. In terms of domain architecture, GAF spans 218–401 (SMERLCDTMV…VFAIHVNKEL (184 aa)). Residue Cys323 participates in phytochromobilin binding. The PAS 1 domain occupies 617 to 687 (VTAEMVRLIE…KMLELALQGK (71 aa)). One can recognise a PAC domain in the interval 690–746 (RNVEFEIKTHGPSGDSSPISLIVNACASRDVGDSVVGVCFIAQDITGQKNIMDKFTR). Residues 747 to 821 (IEGDYRAIIQ…KNQEAFVNFG (75 aa)) form the PAS 2 domain. The 218-residue stretch at 901 to 1118 (YIRRQIRNPL…TFIISVELAV (218 aa)) folds into the Histidine kinase domain.

It belongs to the phytochrome family. In terms of assembly, homodimer. Contains one covalently linked phytochromobilin chromophore.

Regulatory photoreceptor which exists in two forms that are reversibly interconvertible by light: the Pr form that absorbs maximally in the red region of the spectrum and the Pfr form that absorbs maximally in the far-red region. Photoconversion of Pr to Pfr induces an array of morphogenic responses, whereas reconversion of Pfr to Pr cancels the induction of those responses. Pfr controls the expression of a number of nuclear genes including those encoding the small subunit of ribulose-bisphosphate carboxylase, chlorophyll A/B binding protein, protochlorophyllide reductase, rRNA, etc. It also controls the expression of its own gene(s) in a negative feedback fashion. The protein is Phytochrome A1 (PHYA1) of Nicotiana tabacum (Common tobacco).